The primary structure comprises 274 residues: Large ribosomal subunit protein uL2 (274 aa).

A disordered region spans residues 223–274 (GIAMNPVDHPHGGGEGRSKGNHPVTPWGMPTKGYKTRKKKQSDKYIISRRKK). Residues 230–240 (DHPHGGGEGRS) show a composition bias toward basic and acidic residues. The span at 256 to 274 (YKTRKKKQSDKYIISRRKK) shows a compositional bias: basic residues.

Belongs to the universal ribosomal protein uL2 family. As to quaternary structure, part of the 50S ribosomal subunit. Forms a bridge to the 30S subunit in the 70S ribosome.

Functionally, one of the primary rRNA binding proteins. Required for association of the 30S and 50S subunits to form the 70S ribosome, for tRNA binding and peptide bond formation. It has been suggested to have peptidyltransferase activity; this is somewhat controversial. Makes several contacts with the 16S rRNA in the 70S ribosome. This chain is Large ribosomal subunit protein uL2, found in Nautilia profundicola (strain ATCC BAA-1463 / DSM 18972 / AmH).